A 510-amino-acid chain; its full sequence is Light-independent protochlorophyllide reductase subunit B (510 aa).

Asp36 lines the [4Fe-4S] cluster pocket. The Proton donor role is filled by Asp296. Residue 431–432 (GM) coordinates substrate.

Belongs to the ChlB/BchB/BchZ family. In terms of assembly, protochlorophyllide reductase is composed of three subunits; ChlL, ChlN and ChlB. Forms a heterotetramer of two ChlB and two ChlN subunits. It depends on [4Fe-4S] cluster as a cofactor.

It is found in the plastid. The protein resides in the chloroplast. The enzyme catalyses chlorophyllide a + oxidized 2[4Fe-4S]-[ferredoxin] + 2 ADP + 2 phosphate = protochlorophyllide a + reduced 2[4Fe-4S]-[ferredoxin] + 2 ATP + 2 H2O. Its pathway is porphyrin-containing compound metabolism; chlorophyll biosynthesis (light-independent). Component of the dark-operative protochlorophyllide reductase (DPOR) that uses Mg-ATP and reduced ferredoxin to reduce ring D of protochlorophyllide (Pchlide) to form chlorophyllide a (Chlide). This reaction is light-independent. The NB-protein (ChlN-ChlB) is the catalytic component of the complex. This chain is Light-independent protochlorophyllide reductase subunit B, found in Angiopteris evecta (Mule's foot fern).